The primary structure comprises 143 residues: YGPNELPAEEGKNAESAIEALKEYEPEMGKEIVPGDLVEISVGDKIPADLRIDQSILTGESVSVIKNILFSGTNVAAGKTQMAETEEIKTPLQQKVGEATETALIVLGEKEFTLEFSRVIVITGDNKKAEIGIAMGSGTAVAK.

This sequence belongs to the cation transport ATPase (P-type) (TC 3.A.3) family. Type IIA subfamily.

Its subcellular location is the endoplasmic reticulum membrane. It is found in the sarcoplasmic reticulum membrane. It carries out the reaction Ca(2+)(in) + ATP + H2O = Ca(2+)(out) + ADP + phosphate + H(+). Its function is as follows. This magnesium-dependent enzyme catalyzes the hydrolysis of ATP coupled with the transport of calcium. Transports calcium ions from the cytosol into the sarcoplasmic/endoplasmic reticulum lumen. Contributes to calcium sequestration involved in muscular excitation/contraction. This chain is Sarcoplasmic/endoplasmic reticulum calcium ATPase, found in Chionoecetes opilio (Atlantic snow crab).